The chain runs to 1212 residues: Nucleolar protein 6 (1212 aa).

Disordered stretches follow at residues 1–72 (MGKI…PVSI) and 1156–1212 (KREQ…KSLS). Positions 1197 to 1212 (LKRKSLIKSRPLKSLS) are enriched in basic residues.

Belongs to the NRAP family. In terms of assembly, part of the small subunit (SSU) processome, composed of more than 70 proteins and the RNA chaperone small nucleolar RNA (snoRNA) U3.

Its subcellular location is the nucleus. It is found in the nucleolus. The protein localises to the chromosome. Functionally, part of the small subunit (SSU) processome, first precursor of the small eukaryotic ribosomal subunit. During the assembly of the SSU processome in the nucleolus, many ribosome biogenesis factors, an RNA chaperone and ribosomal proteins associate with the nascent pre-rRNA and work in concert to generate RNA folding, modifications, rearrangements and cleavage as well as targeted degradation of pre-ribosomal RNA by the RNA exosome. In Drosophila pseudoobscura pseudoobscura (Fruit fly), this protein is Nucleolar protein 6.